Consider the following 637-residue polypeptide: Galactofuranosyltransferase GlfT2 (637 aa).

4 residues coordinate UDP-alpha-D-galactofuranose: Arg171, Gln200, Asn229, and Asp256. Residues Asp256 and Asp258 each coordinate Mn(2+). Asp372 acts as the Proton acceptor in catalysis. His396 contributes to the Mn(2+) binding site.

The protein belongs to the glycosyltransferase 2 family. Homotetramer. The cofactor is Mn(2+). Mg(2+) is required as a cofactor.

Its subcellular location is the cell membrane. It carries out the reaction beta-D-galactofuranosyl-(1-&gt;5)-beta-D-galactofuranosyl-(1-&gt;4)-alpha-L-rhamnosyl-(1-&gt;3)-N-acetyl-alpha-D-glucosaminyl-diphospho-trans,octa-cis-decaprenol + 28 UDP-alpha-D-galactofuranose = [beta-D-galactofuranosyl-(1-&gt;5)-beta-D-galactofuranosyl-(1-&gt;6)]14-beta-D-galactofuranosyl-(1-&gt;5)-beta-D-galactofuranosyl-(1-&gt;4)-alpha-L-rhamnopyranosyl-(1-&gt;3)-N-acetyl-alpha-D-glucosaminyl-diphospho-trans,octa-cis-decaprenol + 28 UDP + 28 H(+). The protein operates within cell wall biogenesis; cell wall polysaccharide biosynthesis. Its function is as follows. Involved in the galactan polymerization of the arabinogalactan (AG) region of the mycolylarabinogalactan-peptidoglycan (mAGP) complex, an essential component of the mycobacteria cell wall. Thus, successively transfers approximately 28 galactofuranosyl (Galf) residues from UDP-galactofuranose (UDP-Galf) onto the galactofuranosyl-galactofuranosyl-rhamnosyl-GlcNAc-diphospho-decaprenol (Galf-Galf-Rha-GlcNAc-PP-C50) acceptor produced by GlfT1, with alternating 1-&gt;5 and 1-&gt;6 links, forming a galactan domain with approximately 30 galactofuranosyl residues. The sequence is that of Galactofuranosyltransferase GlfT2 from Mycobacterium tuberculosis (strain ATCC 25618 / H37Rv).